Here is a 297-residue protein sequence, read N- to C-terminus: Cytidine deaminase (297 aa).

CMP/dCMP-type deaminase domains lie at 54 to 174 (SSVE…FGPK) and 192 to 297 (LRGD…YIEV). 95–97 (NQE) contacts substrate. A Zn(2+)-binding site is contributed by His-108. Glu-110 functions as the Proton donor in the catalytic mechanism. Zn(2+) contacts are provided by Cys-135 and Cys-138.

This sequence belongs to the cytidine and deoxycytidylate deaminase family. Homodimer. The cofactor is Zn(2+).

The enzyme catalyses cytidine + H2O + H(+) = uridine + NH4(+). The catalysed reaction is 2'-deoxycytidine + H2O + H(+) = 2'-deoxyuridine + NH4(+). Its function is as follows. This enzyme scavenges exogenous and endogenous cytidine and 2'-deoxycytidine for UMP synthesis. The polypeptide is Cytidine deaminase (Actinobacillus pleuropneumoniae serotype 5b (strain L20)).